A 192-amino-acid chain; its full sequence is Immunoglobulin superfamily member 23 (192 aa).

Positions 1–26 (MRAKPQSPLPRNPVPAWSPPTTTTDP) are disordered. A compositionally biased stretch (pro residues) spans 7-18 (SPLPRNPVPAWS). One can recognise an Ig-like domain in the interval 20-128 (PTTTTDPMLE…QLVSEPVTIS (109 aa)). N-linked (GlcNAc...) asparagine glycosylation occurs at Asn-64. The chain crosses the membrane as a helical span at residues 158–178 (LLAAGILGAGALIAGMCFIII).

Expressed in bone and small intestine. Highly expressed in osteoclasts, and low expressed in osteoblasts and peripheral blood mononuclear cells (PBMCs).

Its subcellular location is the cell membrane. Its function is as follows. May be involved in osteoclast differentiation. This is Immunoglobulin superfamily member 23 from Homo sapiens (Human).